The following is a 92-amino-acid chain: Small ribosomal subunit protein uS19 (92 aa).

Belongs to the universal ribosomal protein uS19 family.

Functionally, protein S19 forms a complex with S13 that binds strongly to the 16S ribosomal RNA. The protein is Small ribosomal subunit protein uS19 of Methylobacterium nodulans (strain LMG 21967 / CNCM I-2342 / ORS 2060).